Consider the following 88-residue polypeptide: Large ribosomal subunit protein eL15 (88 aa).

Belongs to the eukaryotic ribosomal protein eL15 family.

The protein is Large ribosomal subunit protein eL15 (RPL15) of Brassica napus (Rape).